Consider the following 321-residue polypeptide: tRNA(Ile)-lysidine synthase (321 aa).

Residue 30 to 35 participates in ATP binding; it reads SGGSDS.

The protein belongs to the tRNA(Ile)-lysidine synthase family.

The protein localises to the cytoplasm. The catalysed reaction is cytidine(34) in tRNA(Ile2) + L-lysine + ATP = lysidine(34) in tRNA(Ile2) + AMP + diphosphate + H(+). In terms of biological role, ligates lysine onto the cytidine present at position 34 of the AUA codon-specific tRNA(Ile) that contains the anticodon CAU, in an ATP-dependent manner. Cytidine is converted to lysidine, thus changing the amino acid specificity of the tRNA from methionine to isoleucine. The protein is tRNA(Ile)-lysidine synthase of Chlamydia trachomatis serovar D (strain ATCC VR-885 / DSM 19411 / UW-3/Cx).